A 145-amino-acid chain; its full sequence is Ponticulin-like protein B (145 aa).

The N-terminal stretch at 1–22 (MLFIKSLLLLLSLIFAVSNATG) is a signal peptide. The N-linked (GlcNAc...) asparagine glycan is linked to asparagine 34. Positions 107 to 126 (DTTSSSTSPSSTSPSSTSPA) are disordered. The span at 108-126 (TTSSSTSPSSTSPSSTSPA) shows a compositional bias: low complexity. Serine 117 carries the GPI-like-anchor amidated serine lipid modification. The propeptide at 118-145 (TSPSSTSPASTLIGSIAFVTLAALFALI) is removed in mature form.

This sequence belongs to the ponticulin family. Post-translationally, the GPI-like-anchor contains a phosphoceramide group, rather than a phosphatidyl group.

The protein resides in the cell membrane. Its function is as follows. Binds F-actin and nucleates actin assembly. The chain is Ponticulin-like protein B (ponB) from Dictyostelium discoideum (Social amoeba).